We begin with the raw amino-acid sequence, 449 residues long: MLDKIVIANRGEIALRILRACKELGIKTVAVHSSADRDLKHVLLADETVCIGPAPSVKSYLNIPAIISAAEITGAVAIHPGYGFLSENANFAEQVERSGFIFIGPKAETIRLMGDKVSAIAAMKKAGVPCVPGSDGPLGDDMDKNRAIAKRIGYPVIIKASGGGGGRGMRVVRGDAELAQSISMTRAEAKAAFSNDMVYMEKYLENPRHVEIQVLADGQGNAIYLAERDCSMQRRHQKVVEEAPAPGITPELRRYIGERCAKACVDIGYRGAGTFEFLFENGEFYFIEMNTRIQVEHPVTEMITGVDLIKEQLRIAAGQPLSIKQEEVHVRGHAVECRINAEDPNTFLPSPGKITRFHAPGGFGVRWESHIYAGYTVPPYYDSMIGKLICYGENRDVAIARMKNALQELIIDGIKTNVDLQIRIMNDENFQHGGTNIHYLEKKLGLQEK.

One can recognise a Biotin carboxylation domain in the interval 1-445 (MLDKIVIANR…NIHYLEKKLG (445 aa)). ATP-binding positions include K116, K159, 165–166 (GG), 201–204 (EKYL), H209, and H236. Residues 120–317 (IAAMKKAGVP…LIKEQLRIAA (198 aa)) form the ATP-grasp domain. K238 is a hydrogencarbonate binding site. Residues E276 and E288 each contribute to the ATP site. 3 residues coordinate Mg(2+): E276, E288, and N290. Mn(2+) contacts are provided by E276, E288, and N290. 3 residues coordinate hydrogencarbonate: R292, V295, and R338. R292 is an active-site residue. Residue R338 participates in biotin binding.

Acetyl-CoA carboxylase is a heterohexamer of biotin carboxyl carrier protein, biotin carboxylase and the two subunits of carboxyl transferase in a 2:2 complex. Requires Mg(2+) as cofactor. It depends on Mn(2+) as a cofactor.

The catalysed reaction is N(6)-biotinyl-L-lysyl-[protein] + hydrogencarbonate + ATP = N(6)-carboxybiotinyl-L-lysyl-[protein] + ADP + phosphate + H(+). The protein operates within lipid metabolism; malonyl-CoA biosynthesis; malonyl-CoA from acetyl-CoA: step 1/1. This protein is a component of the acetyl coenzyme A carboxylase complex; first, biotin carboxylase catalyzes the carboxylation of the carrier protein and then the transcarboxylase transfers the carboxyl group to form malonyl-CoA. The sequence is that of Biotin carboxylase (accC) from Escherichia coli (strain K12).